Consider the following 144-residue polypeptide: Maximins 3/H11 type 2 (144 aa).

A signal peptide spans 1-18 (MHFKYIVAVSFLIASAYA). 2 consecutive propeptides follow at residues 19–43 (RSVQNDEQSLSQRDVLEEESLREIR) and 73–122 (RTAE…KKEK). The residue at position 143 (Ile143) is an Isoleucine amide.

This sequence belongs to the bombinin family. As to expression, expressed by the skin glands.

Its subcellular location is the secreted. Functionally, maximin-3 shows antibacterial activity against both Gram-positive and Gram-negative bacteria. It also shows antimicrobial activity against the fungus C.albicans, but not against A.flavus nor P.uticale. It has little hemolytic activity. It possess a significant cytotoxicity against tumor cell lines. It possess a significant anti-HIV activity. It shows high spermicidal activity. In terms of biological role, maximin-H11 shows antimicrobial activity against bacteria and against the fungus C.albicans. Shows strong hemolytic activity. The chain is Maximins 3/H11 type 2 from Bombina maxima (Giant fire-bellied toad).